The primary structure comprises 647 residues: Pollen receptor-like kinase 2 (647 aa).

The first 21 residues, 1–21 (MESKCLMFVSIVSVFFMVVNG), serve as a signal peptide directing secretion. LRR repeat units follow at residues 87-109 (LNSL…EFKK), 110-134 (LVAL…AFDG), 136-159 (GWLK…LVKS), 161-183 (KLIE…RHHP), and 185-203 (MLNL…SFST). A helical membrane pass occupies residues 248 to 268 (IVAAAVAALAASLIIIGVVIF). In terms of domain architecture, Protein kinase spans 338–613 (KASAEILGSG…EAVEKMEDLM (276 aa)). The residue at position 340 (S340) is a Phosphoserine. ATP contacts are provided by residues 344–352 (LGSGCFGAS) and K366. S418 bears the Phosphoserine mark. Position 438 is a phosphothreonine (T438). A Phosphotyrosine modification is found at Y508. The tract at residues 620–647 (DDDFYSTYASEADGRSSRGLSSEGINLS) is disordered. A compositionally biased stretch (polar residues) spans 637-647 (RGLSSEGINLS).

Belongs to the protein kinase superfamily. Ser/Thr protein kinase family. In terms of assembly, part of a complex containing ROPGEF1 and ARAC11/ROP1. The interaction between PRK2, ROPGEF1 and ARAC11/ROP1 is phosphorylation-independent. Interacts with ROPGEF12 (via C-terminus). Interacts with ROPGEF1 (via PRONE domain). Expressed in pollen and/or in flowers, but not in leaves. Expressed in pollen tube.

It is found in the cell membrane. It carries out the reaction L-seryl-[protein] + ATP = O-phospho-L-seryl-[protein] + ADP + H(+). The enzyme catalyses L-threonyl-[protein] + ATP = O-phospho-L-threonyl-[protein] + ADP + H(+). With respect to regulation, the phosphorylation activity is calcium-independent. Its function is as follows. Receptor-like kinase involved in the control of pollen germination and pollen tube polar growth. Phosphorylates ROPGEF1 in its C-terminal region, releasing its auto-inhibition, and thereby activating the ROP1 signaling pathway. May act as a scaffolding protein, recruiting ROPGEF12 to the plasma membrane by binding to its C-terminal domain. Phosphorylates ROPGEF12, releasing its auto-inhibition. This chain is Pollen receptor-like kinase 2, found in Arabidopsis thaliana (Mouse-ear cress).